The sequence spans 67 residues: Medusin-PT (67 aa).

The signal sequence occupies residues Met-1–Cys-22. Residues Glu-23–Arg-48 constitute a propeptide that is removed on maturation. The tract at residues Glu-25 to Glu-46 is disordered. Residues Glu-31–Arg-40 are compositionally biased toward acidic residues. At Leu-66 the chain carries Leucine amide.

This sequence belongs to the frog skin active peptide (FSAP) family. Medusin subfamily. Post-translationally, in the synthetic mutant medusin-PT1a [T58K], the Leu-50 has been modified in a D-amino acid. In medusin-PT1a, there is an increase in antimicrobial activity, and an increase in hemolytic activity. It is more potent against S.aureus and gains activity against MRSA, E.faecalis, E.coli, P.aeruginosa and C.albicans. There is an important increase in both biofilm inhibition and biofilm eradication. Expressed by the skin glands.

The protein resides in the secreted. Its subcellular location is the target cell membrane. Functionally, antimicrobial peptide with activity against Gram-positive bacteria S.epidermidis ATCC 12228 (MIC=50 uM) and S.aureus (MIC=64 ug/ml and MBC=128 ug/ml). Not active against some Gram-positive bacteria (methicillin-resistant S.aureus (MRSA), E.faecalis), Gram-negative bacterium E.coli ATCC 25922 and fungus C.albicans at concentrations up to 100 uM. Can only slightly inhibit the formation of biofilm by S.aureus (minimal biofilm inhibitionconcentration MBIC=512 ug/ml, minimal biofilm eradication concentration MBEC&gt;512 ug/ml). Has an anti-inflammatory effect, since it inhibits the production of the pro-inflammatory cytokines TNF-alpha and IL-1beta. Has high activity of stimulation of insulin release, which may protect the species from being eaten by predators by causing fatal hypoglycemia. Is not cytotoxic to cancer line cells. Shows very low hemolysis on horse erythrocytes and moderate hemolysis on mouse erythrocytes. The chain is Medusin-PT from Phyllomedusa tarsius (Brownbelly leaf frog).